The primary structure comprises 230 residues: RNA polymerase sigma factor FliA (230 aa).

A sigma-70 factor domain-2 region spans residues 6–78 (LWQRYVPLVR…MLDELRSRDW (73 aa)). An Interaction with polymerase core subunit RpoC motif is present at residues 33-36 (DLLQ). Positions 86 to 156 (NAREVASAMQ…VEPMLEGHED (71 aa)) are sigma-70 factor domain-3. The tract at residues 175 to 223 (AIEALPEREKMVLTLYYQEELNLKEIGAVLEVGESRVSQLHSQAIKRLR) is sigma-70 factor domain-4. Positions 197–216 (LKEIGAVLEVGESRVSQLHS) form a DNA-binding region, H-T-H motif.

The protein belongs to the sigma-70 factor family. FliA subfamily.

The protein localises to the cytoplasm. In terms of biological role, sigma factors are initiation factors that promote the attachment of RNA polymerase to specific initiation sites and are then released. This sigma factor controls the expression of flagella-related genes. The protein is RNA polymerase sigma factor FliA of Yersinia enterocolitica.